The following is a 462-amino-acid chain: Glycine--tRNA ligase (462 aa).

2 residues coordinate substrate: Arg-94 and Glu-143. Residues 175 to 177, 185 to 190, 259 to 260, and 308 to 311 contribute to the ATP site; these read RNE, FRTCEF, EL, and GLTR. Position 190-194 (190-194) interacts with substrate; that stretch reads FEQME. Residue 304-308 participates in substrate binding; that stretch reads ETSAG.

It belongs to the class-II aminoacyl-tRNA synthetase family. In terms of assembly, homodimer.

It is found in the cytoplasm. The catalysed reaction is tRNA(Gly) + glycine + ATP = glycyl-tRNA(Gly) + AMP + diphosphate. Catalyzes the attachment of glycine to tRNA(Gly). The chain is Glycine--tRNA ligase from Treponema pallidum (strain Nichols).